A 508-amino-acid chain; its full sequence is UTP--glucose-1-phosphate uridylyltransferase (508 aa).

At Ser-2 the chain carries N-acetylserine. Phosphoserine occurs at positions 2 and 13. UTP contacts are provided by residues Leu-113–Gly-116, Lys-127, Gln-190, and Gly-222. Position 115–116 (Gly-115–Gly-116) interacts with substrate. Residue Lys-127 coordinates Mg(2+). Substrate-binding positions include His-223, Asn-251–Asp-253, and Asn-330. Asp-253 provides a ligand contact to UTP. Position 253 (Asp-253) interacts with Mg(2+). Lys-396 contacts UTP. The active site involves Lys-396. A Phosphothreonine modification is found at Thr-426. The residue at position 434 (Ser-434) is a Phosphoserine. N6-acetyllysine is present on Lys-438. A phosphoserine mark is found at Ser-448 and Ser-461. The interval His-457–His-508 is oligomerization. The tract at residues Asn-502–Leu-503 is critical for end-to-end subunit interaction.

It belongs to the UDPGP type 1 family. As to quaternary structure, homooctamer. As to expression, highly expressed in various brain regions. Expressed in amygdala, anterior cingulate cortex, caudate, cerebellar hemisphere, cerebellum, cortex, frontal cortex, hippocampus, hypothalamus, nucleus accumbens, putamen, spinal cord and substantia nigra. Also widely expressed among other tissues, including liver, heart, placenta, lung, kidney, pancreas and skeletal muscle.

It localises to the cytoplasm. The enzyme catalyses alpha-D-glucose 1-phosphate + UTP + H(+) = UDP-alpha-D-glucose + diphosphate. It participates in glycan biosynthesis; glycogen biosynthesis. In terms of biological role, UTP--glucose-1-phosphate uridylyltransferase catalyzing the conversion of glucose-1-phosphate into UDP-glucose, a crucial precursor for the production of glycogen. The polypeptide is UTP--glucose-1-phosphate uridylyltransferase (Homo sapiens (Human)).